We begin with the raw amino-acid sequence, 477 residues long: MLESVRIEPKMSYRKIVGVNGPLVIMDNIRFLKYAEMVSLTLPDGSVRQGQVLEVSGKKAVIQVFEGTAGIDVKETQVTFTGETMKMGMSEDVLGRIFNGSGRVIDGGPKIIPEDYLDIQGQPLNPYARIYPEEMIQTGISSIDVMNSIARGQKIPIFSASGLPHNEIAAQICRQAGLVKRKDSIDSSDDNFAIVFAAMGVNVETANFFRNSFEASGSIGRTALFLNLANDPTIERIITPRLALTAAEYLAYEREKHVLVIMTDMSSYADALREVSAAREEVPGRRGYPGYMYTDLSTIYERAGRLEGRNGSITQIPILTMPNDDITHPIPDLTGYITEGQIYVDRQMHNRQIYPPINVLPSLSRLMKSAIGEGMTRKDHGDVSNQLYAKYAIGKDAQAMKAVVGEDSLSAEDRISIEFLERFEREFISQRHDELRTVDQSLDIAWDLLKVFPREMLNRIPSDILDEFHSVAPVGVE.

Arginine 365 is a binding site for ATP.

Belongs to the ATPase alpha/beta chains family. In terms of assembly, V-ATPase is a heteromultimeric enzyme composed of a peripheral catalytic V1 complex (components A to H) attached to an integral membrane V0 proton pore complex (components: a, c, c', c'', d, e, f and VOA1).

It is found in the vacuole membrane. Its function is as follows. Non-catalytic subunit of the V1 complex of vacuolar(H+)-ATPase (V-ATPase), a multisubunit enzyme composed of a peripheral complex (V1) that hydrolyzes ATP and a membrane integral complex (V0) that translocates protons. V-ATPase is responsible for acidifying and maintaining the pH of intracellular compartments. The polypeptide is V-type proton ATPase subunit B (Encephalitozoon cuniculi (strain GB-M1) (Microsporidian parasite)).